Reading from the N-terminus, the 187-residue chain is Elongation factor P (187 aa).

This sequence belongs to the elongation factor P family.

It localises to the cytoplasm. The protein operates within protein biosynthesis; polypeptide chain elongation. Its function is as follows. Involved in peptide bond synthesis. Stimulates efficient translation and peptide-bond synthesis on native or reconstituted 70S ribosomes in vitro. Probably functions indirectly by altering the affinity of the ribosome for aminoacyl-tRNA, thus increasing their reactivity as acceptors for peptidyl transferase. The polypeptide is Elongation factor P (Ruegeria sp. (strain TM1040) (Silicibacter sp.)).